The following is a 153-amino-acid chain: Type II secretion system core protein G (153 aa).

Residues Met-1–Gly-7 constitute a propeptide, leader sequence. Phe-8 is modified (N-methylphenylalanine). A helical transmembrane segment spans residues Phe-8 to Val-28. Disordered stretches follow at residues Glu-68–Gly-91 and Met-126–Pro-153. The span at Gly-134 to His-143 shows a compositional bias: low complexity. Gly residues predominate over residues Asn-144–Pro-153.

The protein belongs to the GSP G family. As to quaternary structure, type II secretion system is composed of four main components: the outer membrane complex, the inner membrane complex, the cytoplasmic secretion ATPase and the periplasm-spanning pseudopilus. Forms homomultimers. Post-translationally, cleaved by the prepilin peptidase. In terms of processing, methylated by prepilin peptidase at the amino group of the N-terminal phenylalanine once the leader sequence is cleaved.

It localises to the cell inner membrane. Core component of the type II secretion system required for the energy-dependent secretion of extracellular factors such as proteases and toxins from the periplasm. Pseudopilin (pilin-like) protein that polymerizes to form the pseudopilus. Further polymerization triggers pseudopilus growth. This chain is Type II secretion system core protein G (outG), found in Dickeya chrysanthemi (Pectobacterium chrysanthemi).